A 140-amino-acid polypeptide reads, in one-letter code: Transcriptional regulator YdaT (140 aa).

In terms of biological role, transcriptional regulator that causes a severe detrimental growth effect and reduces cell viability. When expressed, it alters expression of a variety of bacterial regulons normally controlled by the transcriptional regulatory protein RcsA, resulting in deficient lipopolysaccharide biosynthesis and cell division. YdaT has no effect on Rac prophage excision. Overexpression of ydaST reduces growth and leads to loss of cell viability. May contribute to toxicity and morphological defects. In Escherichia coli (strain K12), this protein is Transcriptional regulator YdaT (ydaT).